The chain runs to 160 residues: Transcriptional repressor NrdR (160 aa).

The segment at 3–34 (CPFCGAEDTSVVDSRVSEEGSRIRRRRQCTAC) is a zinc-finger region. The 91-residue stretch at 49–139 (PQIIKQGGNR…VYRSFEDVGD (91 aa)) folds into the ATP-cone domain.

It belongs to the NrdR family. The cofactor is Zn(2+).

In terms of biological role, negatively regulates transcription of bacterial ribonucleotide reductase nrd genes and operons by binding to NrdR-boxes. In Nitrosomonas eutropha (strain DSM 101675 / C91 / Nm57), this protein is Transcriptional repressor NrdR.